The following is a 696-amino-acid chain: Elongation factor G (696 aa).

Positions 8–282 (DRTRNIGIMA…AVIDYLPSPL (275 aa)) constitute a tr-type G domain. Residues 17–24 (AHIDAGKT), 81–85 (DTPGH), and 135–138 (NKMD) contribute to the GTP site.

Belongs to the TRAFAC class translation factor GTPase superfamily. Classic translation factor GTPase family. EF-G/EF-2 subfamily.

The protein localises to the cytoplasm. Catalyzes the GTP-dependent ribosomal translocation step during translation elongation. During this step, the ribosome changes from the pre-translocational (PRE) to the post-translocational (POST) state as the newly formed A-site-bound peptidyl-tRNA and P-site-bound deacylated tRNA move to the P and E sites, respectively. Catalyzes the coordinated movement of the two tRNA molecules, the mRNA and conformational changes in the ribosome. The sequence is that of Elongation factor G from Staphylococcus saprophyticus subsp. saprophyticus (strain ATCC 15305 / DSM 20229 / NCIMB 8711 / NCTC 7292 / S-41).